The sequence spans 273 residues: Formamidopyrimidine-DNA glycosylase (273 aa).

The Schiff-base intermediate with DNA role is filled by P2. The active-site Proton donor is the E3. The active-site Proton donor; for beta-elimination activity is K58. Positions 91 and 110 each coordinate DNA. An FPG-type zinc finger spans residues 238 to 272 (QVYGKTGQPCPRCASMIVKIKLGGRGTHLCPHCQK). The active-site Proton donor; for delta-elimination activity is the R262.

Belongs to the FPG family. In terms of assembly, monomer. It depends on Zn(2+) as a cofactor.

The catalysed reaction is Hydrolysis of DNA containing ring-opened 7-methylguanine residues, releasing 2,6-diamino-4-hydroxy-5-(N-methyl)formamidopyrimidine.. The enzyme catalyses 2'-deoxyribonucleotide-(2'-deoxyribose 5'-phosphate)-2'-deoxyribonucleotide-DNA = a 3'-end 2'-deoxyribonucleotide-(2,3-dehydro-2,3-deoxyribose 5'-phosphate)-DNA + a 5'-end 5'-phospho-2'-deoxyribonucleoside-DNA + H(+). In terms of biological role, involved in base excision repair of DNA damaged by oxidation or by mutagenic agents. Acts as a DNA glycosylase that recognizes and removes damaged bases. Has a preference for oxidized purines, such as 7,8-dihydro-8-oxoguanine (8-oxoG). Has AP (apurinic/apyrimidinic) lyase activity and introduces nicks in the DNA strand. Cleaves the DNA backbone by beta-delta elimination to generate a single-strand break at the site of the removed base with both 3'- and 5'-phosphates. The polypeptide is Formamidopyrimidine-DNA glycosylase (Streptococcus thermophilus (strain CNRZ 1066)).